We begin with the raw amino-acid sequence, 203 residues long: Peroxiredoxin (203 aa).

One can recognise a Thioredoxin domain in the interval Val-3–Phe-156. The active-site Cysteine sulfenic acid (-SOH) intermediate is the Cys-44. Position 119 (Arg-119) interacts with substrate.

Belongs to the peroxiredoxin family. Prx6 subfamily. As to quaternary structure, homodecamer. Pentamer of dimers that assemble into a ring structure.

Its subcellular location is the cytoplasm. It carries out the reaction a hydroperoxide + [thioredoxin]-dithiol = an alcohol + [thioredoxin]-disulfide + H2O. Thiol-specific peroxidase that catalyzes the reduction of hydrogen peroxide and organic hydroperoxides to water and alcohols, respectively. Plays a role in cell protection against oxidative stress by detoxifying peroxides. The protein is Peroxiredoxin of Thermoplasma volcanium (strain ATCC 51530 / DSM 4299 / JCM 9571 / NBRC 15438 / GSS1).